The chain runs to 281 residues: Probable catechol O-methyltransferase 2 (281 aa).

Isoleucine 78, glutamate 100, serine 108, glutamate 127, valine 128, alanine 156, and aspartate 183 together coordinate S-adenosyl-L-methionine. Aspartate 183 is a binding site for Mg(2+). Residue lysine 186 coordinates substrate. Mg(2+)-binding residues include aspartate 211 and asparagine 212. Residue asparagine 212 coordinates substrate.

Belongs to the class I-like SAM-binding methyltransferase superfamily. Cation-dependent O-methyltransferase family. Requires Mg(2+) as cofactor.

The protein resides in the vacuole. It catalyses the reaction a catechol + S-adenosyl-L-methionine = a guaiacol + S-adenosyl-L-homocysteine + H(+). This Schizosaccharomyces pombe (strain 972 / ATCC 24843) (Fission yeast) protein is Probable catechol O-methyltransferase 2.